A 412-amino-acid polypeptide reads, in one-letter code: Peptidase T (412 aa).

His-84 is a binding site for Zn(2+). Residue Asp-86 is part of the active site. Asp-146 is a binding site for Zn(2+). Glu-179 serves as the catalytic Proton acceptor. Residues Glu-180, Asp-202, and His-385 each coordinate Zn(2+).

Belongs to the peptidase M20B family. Zn(2+) is required as a cofactor.

It localises to the cytoplasm. The enzyme catalyses Release of the N-terminal residue from a tripeptide.. Its function is as follows. Cleaves the N-terminal amino acid of tripeptides. In Haemophilus influenzae (strain 86-028NP), this protein is Peptidase T.